Reading from the N-terminus, the 1093-residue chain is Non-canonical non-ribosomal peptide synthetase ascB (1093 aa).

Residues 1 to 26 are compositionally biased toward low complexity; the sequence is MTVNGHHTNGVNGANGTNGHANGSNG. The tract at residues 1 to 27 is disordered; that stretch reads MTVNGHHTNGVNGANGTNGHANGSNGI. The segment at 35–392 is adenylation (A) domain; sequence EIVPFVKPQV…LSLTFAPTDN (358 aa). The region spanning 591 to 678 is the Carrier domain; sequence DNLEQNLKSL…EIAAALTKGS (88 aa). An O-(pantetheine 4'-phosphoryl)serine modification is found at S627. The interval 721–971 is thioester reductase (TR) domain; that stretch reads LTGATGSLGS…IPVDDAASTV (251 aa).

The protein belongs to the NRP synthetase family.

The enzyme catalyses ilicicolinate B + AH2 + ATP = ilicicolin B + A + AMP + diphosphate. Its pathway is secondary metabolite biosynthesis; terpenoid biosynthesis. Its function is as follows. Non-canonical non-ribosomal peptide synthetase; part of the asc-1 gene cluster that mediates the biosynthesis of both ascochlorin and ascofuranone, a strong inhibitor of cyanide-insensitive alternative oxidases and a promising drug candidate against African trypanosomiasis. The first step in the pathway is performed by the non-reducing polyketide synthase ascC that produces orsellinic acid by condensing acetyl-CoA with 3 malonyl-CoA units. Orsellinic acid is then prenylated by the prenyltransferase ascA to yield ilicicolinic acid B. Ilicicolinic acid B is further reduced to ilicicolin B by the reductase ascB. The halogenase ascD then chlorinates ilicicolin B to produce ilicicolin A which is converted to ilicicolin A epoxide by the cytochrome P450 monooxygenase ascE that catalyzes stereoselective epoxidation of the terminal double bond of the prenyl group. Ilicicolin A epoxide is the last common precursor for the biosynthesis of ascofuranone and ascochlorin. The terpene cyclase ascF produces a monocyclic terpene, and the cyclization reaction is proposed to be initiated by protonation of the terminal epoxide of ilicicolin A epoxide to generate a monocyclic tertiarycation, which is followed by a series of hydride and methyl shifts with abstraction of proton, leading to the formation of the (14S,15R,19R)-trimethylcyclohexanone ring structure of ilicicolin C, which is finally reduced to ascochlorin by the dehydrogenase ascG. On the other hand, ilicicolin A epoxide is hydroxylated by the cytochrome P450 monooxygenase ascH, and the resultant product is cyclized by the terpene cyclase ascI to ascofuranol via protonation-initiated epoxide ring opening, which facilitates the 6-endo-tet cyclization to form the tetrahy-drofuran ring. Finally, ascofuranol is oxidized into ascofuranone by ascJ. The chain is Non-canonical non-ribosomal peptide synthetase ascB from Acremonium egyptiacum (Oospora egyptiaca).